A 264-amino-acid polypeptide reads, in one-letter code: Small ribosomal subunit protein uS2 (264 aa).

Positions 233-264 (AQTQAGGKAEQEAPATEEAADAQTEEAATPAE) are disordered.

Belongs to the universal ribosomal protein uS2 family.

The protein is Small ribosomal subunit protein uS2 of Psychrobacter arcticus (strain DSM 17307 / VKM B-2377 / 273-4).